A 284-amino-acid polypeptide reads, in one-letter code: Homeobox protein Hox-D13 (284 aa).

A DNA-binding region (homeobox) is located at residues 217–276 (GRKKRVPYTKTQLKELEREYATNKFITKEKRRRISTATNLTERQVTIWFQNRRVKEKKVV).

The protein belongs to the Abd-B homeobox family.

The protein localises to the nucleus. Functionally, sequence-specific transcription factor that binds gene promoters and activates their transcription. Part of a developmental regulatory system that provides cells with specific positional identities on the anterior-posterior axis. In Heterodontus francisci (Horn shark), this protein is Homeobox protein Hox-D13 (HOXD13).